The primary structure comprises 150 residues: 3-hydroxyacyl-[acyl-carrier-protein] dehydratase FabZ (150 aa).

His-53 is an active-site residue.

This sequence belongs to the thioester dehydratase family. FabZ subfamily.

The protein resides in the cytoplasm. The catalysed reaction is a (3R)-hydroxyacyl-[ACP] = a (2E)-enoyl-[ACP] + H2O. Its function is as follows. Involved in unsaturated fatty acids biosynthesis. Catalyzes the dehydration of short chain beta-hydroxyacyl-ACPs and long chain saturated and unsaturated beta-hydroxyacyl-ACPs. The protein is 3-hydroxyacyl-[acyl-carrier-protein] dehydratase FabZ of Photorhabdus laumondii subsp. laumondii (strain DSM 15139 / CIP 105565 / TT01) (Photorhabdus luminescens subsp. laumondii).